A 138-amino-acid polypeptide reads, in one-letter code: Large ribosomal subunit protein uL16 (138 aa).

The protein belongs to the universal ribosomal protein uL16 family. As to quaternary structure, part of the 50S ribosomal subunit.

Binds 23S rRNA and is also seen to make contacts with the A and possibly P site tRNAs. The protein is Large ribosomal subunit protein uL16 of Syntrophobacter fumaroxidans (strain DSM 10017 / MPOB).